The primary structure comprises 647 residues: Beta-glucosidase-like SFR2, chloroplastic (647 aa).

Residues 116–140 (SAAGDGGSQQSWRSTGGENIGDREQ) are disordered. The span at 123–132 (SQQSWRSTGG) shows a compositional bias: polar residues. Residue Asn169 is glycosylated (N-linked (GlcNAc...) asparagine). Residues His258, 302-303 (NE), Tyr414, Glu466, Trp504, 511-512 (EW), and Phe520 contribute to the a beta-D-glucoside site. Glu303 (proton donor) is an active-site residue. Glu466 acts as the Nucleophile in catalysis.

The protein belongs to the glycosyl hydrolase 1 family.

It localises to the plastid. Its subcellular location is the chloroplast outer membrane. It catalyses the reaction 2 a 1,2-diacyl-3-O-(beta-D-galactosyl)-sn-glycerol = a 1,2-diacyl-3-O-[beta-D-galactosyl-(1-&gt;6)-beta-D-galactosyl]-sn-glycerol + a 1,2-diacyl-sn-glycerol. Galactosyltransferase synthesizing digalactosyldiacylglycerol from monogalactosyldiacylglycerol in the absence of UDP-galactose. Potentially involved in freezing tolerance. In Oryza sativa subsp. japonica (Rice), this protein is Beta-glucosidase-like SFR2, chloroplastic.